A 114-amino-acid chain; its full sequence is uncharacterized protein (114 aa).

Disordered stretches follow at residues 26–45 (GMKQ…DALG) and 72–98 (PKGS…SVQA).

This is an uncharacterized protein from Homo sapiens (Human).